Here is a 100-residue protein sequence, read N- to C-terminus: Ubiquitin-related modifier 1 homolog (100 aa).

Gly100 bears the 1-thioglycine mark. Gly100 is covalently cross-linked (Glycyl lysine isopeptide (Gly-Lys) (interchain with K-? in acceptor proteins)).

The protein belongs to the URM1 family. C-terminal thiocarboxylation occurs in 2 steps, it is first acyl-adenylated (-COAMP) via the hesA/moeB/thiF part of the MOCS3 homolog, then thiocarboxylated (-COSH) via the rhodanese domain of the MOCS3 homolog.

Its subcellular location is the cytoplasm. It functions in the pathway tRNA modification; 5-methoxycarbonylmethyl-2-thiouridine-tRNA biosynthesis. Functionally, acts as a sulfur carrier required for 2-thiolation of mcm(5)S(2)U at tRNA wobble positions of cytosolic tRNA(Lys), tRNA(Glu) and tRNA(Gln). Serves as sulfur donor in tRNA 2-thiolation reaction by being thiocarboxylated (-COSH) at its C-terminus by MOCS3. The sulfur is then transferred to tRNA to form 2-thiolation of mcm(5)S(2)U. Also acts as a ubiquitin-like protein (UBL) that is covalently conjugated via an isopeptide bond to lysine residues of target proteins. The thiocarboxylated form serves as substrate for conjugation and oxidative stress specifically induces the formation of UBL-protein conjugates. In Caenorhabditis elegans, this protein is Ubiquitin-related modifier 1 homolog.